Consider the following 119-residue polypeptide: Hemerythrin subunit A (119 aa).

Residues His-26, His-55, Glu-59, His-74, His-78, His-107, and Asp-112 each contribute to the Fe cation site.

Belongs to the hemerythrin family.

Hemerythrin is a respiratory protein in blood cells of certain marine worms. The oxygen-binding site in each chain contains two iron atoms. The chain is Hemerythrin subunit A from Sipunculus nudus (Sipunculan worm).